Reading from the N-terminus, the 591-residue chain is Parathyroid hormone/parathyroid hormone-related peptide receptor (591 aa).

Residues 1-26 (MGAARIAPSLALLLCCPVLSSAYALV) form the signal peptide. Over 27–188 (DADDVFTKEE…REREVFDRLG (162 aa)) the chain is Extracellular. Intrachain disulfides connect cysteine 48–cysteine 117, cysteine 108–cysteine 148, and cysteine 131–cysteine 170. Residues 67-104 (KGWTPASTSGKPRKEKASGKFYPESKENKDVPTGSRRR) form a disordered region. A compositionally biased stretch (basic and acidic residues) spans 81 to 96 (EKASGKFYPESKENKD). Residues asparagine 151, asparagine 161, asparagine 166, and asparagine 176 are each glycosylated (N-linked (GlcNAc...) asparagine). The chain crosses the membrane as a helical span at residues 189-212 (MIYTVGYSMSLASLTVAVLILAYF). The Cytoplasmic portion of the chain corresponds to 213–219 (RRLHCTR). The helical transmembrane segment at 220–239 (NYIHMHMFLSFMLRAASIFV) threads the bilayer. At 240–282 (KDAVLYSGFTLDEAERLTEEELHIIAQVPPPPAAAAVGYAGCR) the chain is on the extracellular side. Residues 283–306 (VAVTFFLYFLATNYYWILVEGLYL) form a helical membrane-spanning segment. Residues 307–320 (HSLIFMAFFSEKKY) lie on the Cytoplasmic side of the membrane. Residues 321–342 (LWGFTIFGWGLPAVFVAVWVGV) traverse the membrane as a helical segment. The Extracellular portion of the chain corresponds to 343-361 (RATLANTGCWDLSSGHKKW). A helical transmembrane segment spans residues 362–382 (IIQVPILASVVLNFILFINII). The Cytoplasmic portion of the chain corresponds to 383–409 (RVLATKLRETNAGRCDTRQQYRKLLRS). Residues 410–428 (TLVLVPLFGVHYTVFMALP) form a helical membrane-spanning segment. Topologically, residues 429 to 440 (YTEVSGTLWQIQ) are extracellular. The helical transmembrane segment at 441–463 (MHYEMLFNSFQGFFVAIIYCFCN) threads the bilayer. Over 464–591 (GEVQAEIRKS…LLQEEWETVM (128 aa)) the chain is Cytoplasmic. An Important for interaction with G proteins motif is present at residues 474–477 (WSRW). Positions 516–544 (LPLSPRLPPATTNGHSQLPGHAKPGAPAT) are disordered.

Belongs to the G-protein coupled receptor 2 family. As to quaternary structure, homodimer in the absence of bound ligand. Peptide hormone binding leads to dissociation of the homodimer. Post-translationally, N-glycosylated.

The protein resides in the cell membrane. Functionally, G-protein-coupled receptor for parathyroid hormone (PTH) and for parathyroid hormone-related peptide (PTHLH). Ligand binding causes a conformation change that triggers signaling via guanine nucleotide-binding proteins (G proteins) and modulates the activity of downstream effectors, such as adenylate cyclase (cAMP). PTH1R is coupled to G(s) G alpha proteins and mediates activation of adenylate cyclase activity. PTHLH dissociates from PTH1R more rapidly than PTH; as consequence, the cAMP response induced by PTHLH decays faster than the response induced by PTH. This chain is Parathyroid hormone/parathyroid hormone-related peptide receptor (Pth1r), found in Rattus norvegicus (Rat).